Reading from the N-terminus, the 521-residue chain is GMP synthase [glutamine-hydrolyzing] (521 aa).

The 193-residue stretch at 5–197 folds into the Glutamine amidotransferase type-1 domain; the sequence is KILILDFGSQ…VLDICGAQPG (193 aa). The active-site Nucleophile is the C81. Catalysis depends on residues H171 and E173. Residues 198-390 enclose the GMPS ATP-PPase domain; that stretch reads WTMPNYIEEA…LGLPREMVYR (193 aa). Position 225–231 (225–231) interacts with ATP; that stretch reads SGGVDSS.

As to quaternary structure, homodimer.

The catalysed reaction is XMP + L-glutamine + ATP + H2O = GMP + L-glutamate + AMP + diphosphate + 2 H(+). Its pathway is purine metabolism; GMP biosynthesis; GMP from XMP (L-Gln route): step 1/1. Catalyzes the synthesis of GMP from XMP. The chain is GMP synthase [glutamine-hydrolyzing] (guaA) from Neisseria meningitidis serogroup A / serotype 4A (strain DSM 15465 / Z2491).